Here is a 286-residue protein sequence, read N- to C-terminus: MTALTESSTSKFLNIKEKGLSDFKIHYNEAGNGETVIMLHGGGPGAGGWSNYYRNIGPFVEAGYRVILKDSPGFNKSDAVVMDEQRGLVNARAVKGLMDALGIDRAHLVGNSMGGATALNFAIEYPDRIGKLILMGPGGLGPSMFAPMPLEGIKLLFKLYAEPSYENLKQMIQVFLYDQSLITEELLQGRWEAIQRQPEHLKNFLISAQKAPLSTWDVTARLGEIKAKTFITWGRDDRFVPLDHGLKLLWNIDDARLHVFSKCGHWAQWEHADEFNRLAIDFLRQA.

Substrate contacts are provided by residues 42 to 43 (GG), N51, N111, S180, and R190. The Proton acceptor role is filled by H265. W266 is a binding site for substrate.

It belongs to the AB hydrolase superfamily. BphD family. Homodimer.

The enzyme catalyses 2,6-dioxo-6-phenylhexa-3-enoate + H2O = 2-oxopent-4-enoate + benzoate + H(+). It participates in xenobiotic degradation; biphenyl degradation; 2-hydroxy-2,4-pentadienoate and benzoate from biphenyl: step 4/4. Functionally, catalyzes an unusual C-C bond hydrolysis of 2-hydroxy-6-oxo-6-phenylhexa-2,4-dienoic acid (HOPDA) to produce benzoic acid and 2-hydroxy-2,4-pentadienoic acid (HPD). The polypeptide is 2-hydroxy-6-oxo-6-phenylhexa-2,4-dienoate hydrolase (bphD) (Pseudomonas putida (Arthrobacter siderocapsulatus)).